The chain runs to 64 residues: DNA-binding protein 7a (64 aa).

Lys-5 and Lys-7 each carry N6-methyllysine; partial.

The protein belongs to the 7 kDa DNA-binding/endoribonuclease P2 family. Homodimer. Post-translationally, lys-5 and Lys-7 were found to be 60% monomethylated. ADP-ribosylated by endogenous proteins in vitro.

Functionally, can constrain negative DNA supercoils. May be involved in maintaining the integrity of the genome at high temperature. Has RNA endonuclease activity with a narrow substrate specificity; the cleavage products are 3'-phosphooligonucleotides. The polypeptide is DNA-binding protein 7a (sso7a1) (Saccharolobus solfataricus (strain ATCC 35092 / DSM 1617 / JCM 11322 / P2) (Sulfolobus solfataricus)).